Consider the following 372-residue polypeptide: Glycerophosphodiester phosphodiesterase GDPD6 (372 aa).

The signal sequence occupies residues 1-21 (MAFKYLLPLLLLSLLVANCAS). The tract at residues 32-58 (KHATKKPLQTSRPYNLAHRGSNGELPE) is disordered. A GP-PDE domain is found at 44 to 362 (PYNLAHRGSN…DFTGSLHNYQ (319 aa)). 3 N-linked (GlcNAc...) asparagine glycosylation sites follow: asparagine 120, asparagine 239, and asparagine 260.

The protein belongs to the glycerophosphoryl diester phosphodiesterase family. As to expression, expressed in flowers and siliques.

The enzyme catalyses a sn-glycero-3-phosphodiester + H2O = an alcohol + sn-glycerol 3-phosphate + H(+). This Arabidopsis thaliana (Mouse-ear cress) protein is Glycerophosphodiester phosphodiesterase GDPD6.